A 283-amino-acid chain; its full sequence is RNase adapter protein RapZ (283 aa).

8–15 (GRSGSGKS) serves as a coordination point for ATP. 56–59 (DVRN) contributes to the GTP binding site. The tract at residues 266 to 283 (RSRGKNVQSRHRTLEKRK) is RNA-binding.

Belongs to the RapZ-like family. RapZ subfamily. Homotrimer.

Functionally, modulates the synthesis of GlmS, by affecting the processing and stability of the regulatory small RNA GlmZ. When glucosamine-6-phosphate (GlcN6P) concentrations are high in the cell, RapZ binds GlmZ and targets it to cleavage by RNase E. Consequently, GlmZ is inactivated and unable to activate GlmS synthesis. Under low GlcN6P concentrations, RapZ is sequestered and inactivated by an other regulatory small RNA, GlmY, preventing GlmZ degradation and leading to synthesis of GlmS. The polypeptide is RNase adapter protein RapZ (Photorhabdus laumondii subsp. laumondii (strain DSM 15139 / CIP 105565 / TT01) (Photorhabdus luminescens subsp. laumondii)).